Consider the following 811-residue polypeptide: Receptor-like protein 46 (811 aa).

An N-terminal signal peptide occupies residues 1 to 21; it reads MSKQCLLSCFLFFCFFIPQLS. Residues 22 to 782 are Extracellular-facing; that stretch reads FSCPQDQRQS…EEEDKEEEET (761 aa). Asn-46, Asn-71, Asn-128, and Asn-143 each carry an N-linked (GlcNAc...) asparagine glycan. LRR repeat units follow at residues 104–128, 129–153, 155–177, 178–201, 203–225, 226–249, 251–273, 275–298, 299–322, 324–348, 349–369, 370–395, 397–419, 421–442, 443–466, 468–488, 490–510, 511–534, 536–560, 561–583, 643–665, 666–688, 690–713, and 714–738; these read INSL…AFVN, LTSL…LFSL, NLQR…IKEL, KNLQ…IGSL, ELLT…VSRL, TKLK…IGNL, NLST…IHNL, NLET…WLFG, LQKL…GYVF, QFKL…LKNQ, TALV…PKWL, ADLK…LFQR, SLYY…IGES, VMVL…ITKI, PFLK…RPES, LEWL…YFGG, TSML…NFRN, LSYL…LISQ, SSSV…ISNL, TSLK…SLGN, LYTL…LGNL, KSLK…SFGD, EKVE…LSKL, and SELN…QLDR. N-linked (GlcNAc...) asparagine glycosylation is present at Asn-215. Asn-251 is a glycosylation site (N-linked (GlcNAc...) asparagine). Residue Asn-347 is glycosylated (N-linked (GlcNAc...) asparagine). 3 N-linked (GlcNAc...) asparagine glycosylation sites follow: Asn-376, Asn-407, and Asn-430. N-linked (GlcNAc...) asparagine glycans are attached at residues Asn-499 and Asn-510. Asn-546, Asn-559, and Asn-583 each carry an N-linked (GlcNAc...) asparagine glycan. 2 N-linked (GlcNAc...) asparagine glycosylation sites follow: Asn-672 and Asn-701. Residue Asn-747 is glycosylated (N-linked (GlcNAc...) asparagine). A helical membrane pass occupies residues 783 to 803; the sequence is IFSWNAAAIGCSCGFLIAVVF. Over 804–811 the chain is Cytoplasmic; that stretch reads MSYNELWK.

This sequence belongs to the RLP family.

Its subcellular location is the cell membrane. This Arabidopsis thaliana (Mouse-ear cress) protein is Receptor-like protein 46.